The following is a 337-amino-acid chain: Ketol-acid reductoisomerase (NADP(+)) (337 aa).

Residues 1–183 form the KARI N-terminal Rossmann domain; that stretch reads MAIETLYDSD…GGARAGVIPT (183 aa). Residues 26–29, Arg-49, Ser-52, Ser-54, and 84–87 each bind NADP(+); these read YGSQ and DTSQ. His-109 is a catalytic residue. NADP(+) is bound at residue Gly-135. The 146-residue stretch at 184–329 folds into the KARI C-terminal knotted domain; sequence TFKDETETDL…SQLRDLMSWV (146 aa). Residues Asp-192, Glu-196, Glu-228, and Glu-232 each coordinate Mg(2+). Ser-253 is a binding site for substrate.

It belongs to the ketol-acid reductoisomerase family. Mg(2+) serves as cofactor.

The enzyme catalyses (2R)-2,3-dihydroxy-3-methylbutanoate + NADP(+) = (2S)-2-acetolactate + NADPH + H(+). It carries out the reaction (2R,3R)-2,3-dihydroxy-3-methylpentanoate + NADP(+) = (S)-2-ethyl-2-hydroxy-3-oxobutanoate + NADPH + H(+). The protein operates within amino-acid biosynthesis; L-isoleucine biosynthesis; L-isoleucine from 2-oxobutanoate: step 2/4. It functions in the pathway amino-acid biosynthesis; L-valine biosynthesis; L-valine from pyruvate: step 2/4. Functionally, involved in the biosynthesis of branched-chain amino acids (BCAA). Catalyzes an alkyl-migration followed by a ketol-acid reduction of (S)-2-acetolactate (S2AL) to yield (R)-2,3-dihydroxy-isovalerate. In the isomerase reaction, S2AL is rearranged via a Mg-dependent methyl migration to produce 3-hydroxy-3-methyl-2-ketobutyrate (HMKB). In the reductase reaction, this 2-ketoacid undergoes a metal-dependent reduction by NADPH to yield (R)-2,3-dihydroxy-isovalerate. The sequence is that of Ketol-acid reductoisomerase (NADP(+)) from Corynebacterium aurimucosum (strain ATCC 700975 / DSM 44827 / CIP 107346 / CN-1) (Corynebacterium nigricans).